A 345-amino-acid chain; its full sequence is NADPH dehydrogenase (345 aa).

23-26 (SPMC) lines the FMN pocket. Tyrosine 28 lines the substrate pocket. Alanine 60 and glutamine 102 together coordinate FMN. Residue 164-167 (HGAH) participates in substrate binding. Residues arginine 215 and 307–308 (GR) contribute to the FMN site.

Belongs to the NADH:flavin oxidoreductase/NADH oxidase family. NamA subfamily. In terms of assembly, homotetramer. FMN serves as cofactor.

It catalyses the reaction A + NADPH + H(+) = AH2 + NADP(+). Catalyzes the reduction of the double bond of an array of alpha,beta-unsaturated aldehydes and ketones. It also reduces the nitro group of nitroester and nitroaromatic compounds. It could have a role in detoxification processes. The sequence is that of NADPH dehydrogenase from Bacillus cereus (strain ATCC 10987 / NRS 248).